The chain runs to 215 residues: UPF0502 protein CKO_01995 (215 aa).

This sequence belongs to the UPF0502 family.

The sequence is that of UPF0502 protein CKO_01995 from Citrobacter koseri (strain ATCC BAA-895 / CDC 4225-83 / SGSC4696).